Here is a 79-residue protein sequence, read N- to C-terminus: Acyl carrier protein (79 aa).

The region spanning Ser-2–Ala-77 is the Carrier domain. The residue at position 37 (Ser-37) is an O-(pantetheine 4'-phosphoryl)serine.

It belongs to the acyl carrier protein (ACP) family. 4'-phosphopantetheine is transferred from CoA to a specific serine of apo-ACP by AcpS. This modification is essential for activity because fatty acids are bound in thioester linkage to the sulfhydryl of the prosthetic group.

It localises to the cytoplasm. The protein operates within lipid metabolism; fatty acid biosynthesis. In terms of biological role, carrier of the growing fatty acid chain in fatty acid biosynthesis. This chain is Acyl carrier protein, found in Rhodopseudomonas palustris (strain BisA53).